The primary structure comprises 70 residues: Fumarase D (70 aa).

This sequence belongs to the FumD family.

It carries out the reaction (S)-malate = fumarate + H2O. Its function is as follows. In vitro catalyzes the addition of water to fumarate, forming malate. Cannot catalyze the reverse reaction. Cannot use the cis-isomer maleate as substrate. In Salmonella typhi, this protein is Fumarase D.